The primary structure comprises 293 residues: Protein phosphatase 1 regulatory subunit 3B (293 aa).

Residues 129-237 (RQRIENDHVC…NNQGKNYRII (109 aa)) enclose the CBM21 domain.

In terms of assembly, interacts with glycogen, PPP1CC catalytic subunit of PP1 and PYGL. Associates with glycogen particles. Forms complexes with debranching enzyme, glycogen phosphorylase, glycogen synthase and phosphorylase kinase which is necessary for its regulation of PP1 activity.

In terms of biological role, acts as a glycogen-targeting subunit for phosphatase PP1. Facilitates interaction of the PP1 with enzymes of the glycogen metabolism and regulates its activity. Suppresses the rate at which PP1 dephosphorylates (inactivates) glycogen phosphorylase and enhances the rate at which it activates glycogen synthase and therefore limits glycogen breakdown. In Danio rerio (Zebrafish), this protein is Protein phosphatase 1 regulatory subunit 3B (ppp1r3b).